A 543-amino-acid polypeptide reads, in one-letter code: MHPNYYLSPLAVAIALGIASPVKAADPIPLQKSSFSEVTQKFQLTLPGVMKGAVVSTNSLQFIRQHTDGNKVTHVRMQQQYAGFPVFGGYAILHSKNATPSLATAKSDEKMNGVIYDGLQAELGQPKPSFVKNASMALQQFKDKYANKQVSEDQVTPMIYIDEKHQAHWAYKVSVLVIHDDRIPERPTAIIDAETNKPFVQWDDVKTEKVQAKGMGFGGNRKIGEYQFGKDLPLLEITRDSSVEMCFMENTDVKVVDMGHKYYSNNKPMQFTCKETPDTQSTKTYYTGYSADGYDRDNGAASPTNDALYAGYVIKHMYHDWYGVEALTKSDGSPMQLVMRVHYGQGYENAYWDGKQMTFGDGDTMMYPLVSLGVGGHEVSHGFTEQHSGLEYFGQSGGMNESFSDMAAQAAEYYSVGKNSWQIGPEIMKEDSGYDALRYMDKPSRDGMSIDVADDYYGGLDVHYSSGVYNHLFYILANQPNWNLRMAFDVMVKANMDYWTPYSTFDEGGCGMLSAAKDLGYNLDDIKKSLSEVTINYQSCYVD.

The first 24 residues, 1–24, serve as a signal peptide directing secretion; sequence MHPNYYLSPLAVAIALGIASPVKA. A propeptide spanning residues 25-207 is cleaved from the precursor; the sequence is ADPIPLQKSS…PFVQWDDVKT (183 aa). His-377 contacts Zn(2+). Glu-378 is an active-site residue. His-381 and Glu-401 together coordinate Zn(2+). His-463 (proton donor) is an active-site residue.

The protein belongs to the peptidase M4 family. Requires Zn(2+) as cofactor.

Its subcellular location is the secreted. Its function is as follows. Cleaves collagen, gelatin, casein, alpha-1-antitrypsin, and bovine insulin. May play a role in the pathogenesis of legionnaires disease. The chain is Zinc metalloproteinase from Legionella pneumophila.